The chain runs to 328 residues: Testis-specific serine/threonine-protein kinase 4 (328 aa).

The Protein kinase domain occupies 25-293 (YEVGKAIGHG…ILDIIKDSWV (269 aa)). ATP contacts are provided by residues 31 to 39 (IGHGSYGSV) and Lys54. Asp148 functions as the Proton acceptor in the catalytic mechanism. Phosphothreonine is present on Thr197.

This sequence belongs to the protein kinase superfamily. CAMK Ser/Thr protein kinase family. Homodimer. Interacts with HSP90; this interaction stabilizes and activates TSSK4. Interacts with ODF2 (via C-terminus); this interaction promotes ODF2 phosphorylation on 'Ser-95'. May interact with CREM. Interacts with CREB1; this interaction facilitates phosphorylation on 'Ser-133'. Interacts with QRICH2. Mg(2+) is required as a cofactor. Activated by autophosphorylation on Thr-197. ODF2 potentiates the autophosphorylation activity of TSSK4 at Thr-197. In terms of processing, ubiquitinated; HSP90 activity negatively regulates ubiquitination and degradation. Expressed only in the testis.

It is found in the cytoplasmic vesicle. Its subcellular location is the secretory vesicle. The protein localises to the acrosome. It localises to the cell projection. The protein resides in the cilium. It is found in the flagellum. The catalysed reaction is L-seryl-[protein] + ATP = O-phospho-L-seryl-[protein] + ADP + H(+). It catalyses the reaction L-threonyl-[protein] + ATP = O-phospho-L-threonyl-[protein] + ADP + H(+). With respect to regulation, activated by phosphorylation on Thr-197. Its function is as follows. Serine/threonine kinase which is involved in male germ cell development and in mature sperm function. May be involved in the Cre/Creb signaling pathway. Phosphorylates CREB1 on 'Ser-133' in vitro and can stimulate Cre/Creb pathway in cells. Phosphorylates CREM on 'Ser-116' in vitro. Phosphorylates ODF2 on 'Ser-95'. The chain is Testis-specific serine/threonine-protein kinase 4 from Homo sapiens (Human).